The sequence spans 635 residues: Threonine--tRNA ligase (635 aa).

The TGS domain maps to 1–61 (MIVITLPDGS…EGDARLAIVT (61 aa)). The segment at 242 to 533 (DHRKLGRELD…LIEQHAGALP (292 aa)) is catalytic. Zn(2+)-binding residues include cysteine 333, histidine 384, and histidine 510.

This sequence belongs to the class-II aminoacyl-tRNA synthetase family. Homodimer. It depends on Zn(2+) as a cofactor.

It is found in the cytoplasm. The enzyme catalyses tRNA(Thr) + L-threonine + ATP = L-threonyl-tRNA(Thr) + AMP + diphosphate + H(+). Catalyzes the attachment of threonine to tRNA(Thr) in a two-step reaction: L-threonine is first activated by ATP to form Thr-AMP and then transferred to the acceptor end of tRNA(Thr). Also edits incorrectly charged L-seryl-tRNA(Thr). The protein is Threonine--tRNA ligase of Methylibium petroleiphilum (strain ATCC BAA-1232 / LMG 22953 / PM1).